A 217-amino-acid chain; its full sequence is Large ribosomal subunit protein uL1 (217 aa).

This sequence belongs to the universal ribosomal protein uL1 family. As to quaternary structure, component of the large ribosomal subunit (LSU). Mature ribosomes consist of a small (40S) and a large (60S) subunit. The 40S subunit contains about 32 different proteins and 1 molecule of RNA (18S). The 60S subunit contains 45 different proteins and 3 molecules of RNA (25S, 5.8S and 5S). uL1 forms part of the L1 stalk.

The protein resides in the cytoplasm. Component of the ribosome, a large ribonucleoprotein complex responsible for the synthesis of proteins in the cell. The small ribosomal subunit (SSU) binds messenger RNAs (mRNAs) and translates the encoded message by selecting cognate aminoacyl-transfer RNA (tRNA) molecules. The large subunit (LSU) contains the ribosomal catalytic site termed the peptidyl transferase center (PTC), which catalyzes the formation of peptide bonds, thereby polymerizing the amino acids delivered by tRNAs into a polypeptide chain. The nascent polypeptides leave the ribosome through a tunnel in the LSU and interact with protein factors that function in enzymatic processing, targeting, and the membrane insertion of nascent chains at the exit of the ribosomal tunnel. uL1 forms part of the L1 stalk, a mobile element that plays a role in evacuating the exit-site tRNA. The chain is Large ribosomal subunit protein uL1 (RPL10A) from Candida albicans (strain SC5314 / ATCC MYA-2876) (Yeast).